The primary structure comprises 130 residues: Small ribosomal subunit protein uS11 (130 aa).

Belongs to the universal ribosomal protein uS11 family. As to quaternary structure, part of the 30S ribosomal subunit. Interacts with proteins S7 and S18. Binds to IF-3.

Its function is as follows. Located on the platform of the 30S subunit, it bridges several disparate RNA helices of the 16S rRNA. Forms part of the Shine-Dalgarno cleft in the 70S ribosome. The polypeptide is Small ribosomal subunit protein uS11 (Thermotoga petrophila (strain ATCC BAA-488 / DSM 13995 / JCM 10881 / RKU-1)).